The chain runs to 354 residues: Mitogen-activated protein kinase kinase 1 (354 aa).

The Protein kinase domain maps to Leu-68 to Val-328. Residues Ile-74–Val-82 and Lys-97 contribute to the ATP site. Catalysis depends on Asp-190, which acts as the Proton acceptor. A Phosphothreonine modification is found at Thr-218. Ser-224 is modified (phosphoserine). A Phosphothreonine modification is found at Thr-228.

This sequence belongs to the protein kinase superfamily. STE Ser/Thr protein kinase family. MAP kinase kinase subfamily. In terms of assembly, interacts with MEKK1 and MPK4. May form a ternary complex composed of MEKK1 and MKK1/MKK2 and MPK4. Interacts with P.syringae type III effector HopF2. Interacts with MPK11. Post-translationally, phosphorylation at Thr-218 and Ser-224 by MAP kinase kinase kinases positively regulates kinase activity. Expressed in roots, stem, flowers and siliques.

It carries out the reaction L-seryl-[protein] + ATP = O-phospho-L-seryl-[protein] + ADP + H(+). The catalysed reaction is L-threonyl-[protein] + ATP = O-phospho-L-threonyl-[protein] + ADP + H(+). The enzyme catalyses L-tyrosyl-[protein] + ATP = O-phospho-L-tyrosyl-[protein] + ADP + H(+). Activated through serine and threonine phosphorylation in response to wounding, cold, drought, salt stresses, abscisic acid (ABA), hydrogen peroxide, bacterial flagellin and laminarin beta-glucan. Functionally, MEKK1, MKK1/MKK2 and MPK4/MPK6 function in a signaling pathway that modulates the expression of genes responding to biotic and abiotic stresses and also plays an important role in pathogen defense by negatively regulating innate immunity. Activates by phosphorylation the downstream MPK4. Acts redundantly with MKK2. MKK1-MPK6 module mediates abscisic acid (ABA)-dependent CAT1 expression with H(2)O(2) production and response to drought and salt stress. MKK1-MPK6 module is also involved in sugar signaling during the process of seed germination. The protein is Mitogen-activated protein kinase kinase 1 (MKK1) of Arabidopsis thaliana (Mouse-ear cress).